The primary structure comprises 722 residues: Pre-B-cell leukemia transcription factor-interacting protein 1 (722 aa).

A compositionally biased stretch (polar residues) spans 1 to 10; that stretch reads MASCPDSDNS. The interval 1 to 180 is disordered; that stretch reads MASCPDSDNS…TAAVDGEDQA (180 aa). Basic and acidic residues predominate over residues 88–97; sequence DDGHGTKRPG. Phosphoserine occurs at positions 133, 144, 145, and 146. At threonine 150 the chain carries Phosphothreonine. Phosphoserine is present on serine 166. 2 coiled-coil regions span residues 266–346 and 373–401; these read LLLD…RGVD and DTSL…WQLL. Polar residues predominate over residues 442–453; it reads QGINTGRSSNDS. Disordered regions lie at residues 442–562 and 691–722; these read QGIN…SPDS and RRSK…YHQG. 2 stretches are compositionally biased toward basic and acidic residues: residues 465–536 and 546–559; these read HPRE…DPKV and SGER…KDNS. The Nuclear localization signal motif lies at 482-502; sequence QKAEHWKLKKEESGQDRKKSW. Residue serine 559 is modified to Phosphoserine. The Nuclear localization signal signature appears at 686 to 711; it reads DKALKRRSKKKEKQPWNHRAVGPREE.

Interacts with ESR1, PBX1, PBX2 and PBX3. Interacts with TEX11.

The protein resides in the cytoplasm. Its subcellular location is the cytoskeleton. The protein localises to the nucleus. Regulator of pre-B-cell leukemia transcription factors (BPXs) function. Inhibits the binding of PBX1-HOX complex to DNA and blocks the transcriptional activity of E2A-PBX1. Tethers estrogen receptor-alpha (ESR1) to microtubules and allows them to influence estrogen receptors-alpha signaling. This chain is Pre-B-cell leukemia transcription factor-interacting protein 1 (Pbxip1), found in Rattus norvegicus (Rat).